A 698-amino-acid polypeptide reads, in one-letter code: Dolichyl-diphosphooligosaccharide--protein glycosyltransferase subunit 2 (698 aa).

Residues 1–29 (MAAAGGLPASATLLLLVIAAVAVAPLASA) form the signal peptide. Over 30–600 (VRPVSDAHRS…RSPEKRPPKE (571 aa)) the chain is Lumenal. Residues 601–621 (LSFAFTGLTLLPIVGFLIGLM) form a helical membrane-spanning segment. The Cytoplasmic segment spans residues 622 to 638 (RLGVNLKNFPSLPAPAA). The helical transmembrane segment at 639 to 659 (FASLFHAGIGAVLLLYVLFWI) threads the bilayer. Residue Lys-660 is a topological domain, lumenal. Residues 661–681 (LDLFTTLKYLSFLGVFLVFVG) traverse the membrane as a helical segment. At 682-698 (HRALSYLSSTSAKQKTA) the chain is on the cytoplasmic side.

The protein belongs to the SWP1 family. Component of the oligosaccharyltransferase (OST) complex.

It localises to the endoplasmic reticulum membrane. It participates in protein modification; protein glycosylation. Subunit of the oligosaccharyl transferase (OST) complex that catalyzes the initial transfer of a defined glycan (Glc(3)Man(9)GlcNAc(2) in eukaryotes) from the lipid carrier dolichol-pyrophosphate to an asparagine residue within an Asn-X-Ser/Thr consensus motif in nascent polypeptide chains, the first step in protein N-glycosylation. N-glycosylation occurs cotranslationally and the complex associates with the Sec61 complex at the channel-forming translocon complex that mediates protein translocation across the endoplasmic reticulum (ER). All subunits are required for a maximal enzyme activity. This chain is Dolichyl-diphosphooligosaccharide--protein glycosyltransferase subunit 2 (RPN2), found in Oryza sativa subsp. japonica (Rice).